The chain runs to 134 residues: Protein NrdI (134 aa).

This sequence belongs to the NrdI family.

Its function is as follows. Probably involved in ribonucleotide reductase function. This is Protein NrdI from Rhizobium etli (strain CIAT 652).